The chain runs to 267 residues: Small ribosomal subunit protein uS2 (267 aa).

Residues arginine 233–glycine 250 are compositionally biased toward basic and acidic residues. The disordered stretch occupies residues arginine 233 to alanine 267. Over residues glutamate 251–valine 261 the composition is skewed to low complexity.

The protein belongs to the universal ribosomal protein uS2 family.

The sequence is that of Small ribosomal subunit protein uS2 from Syntrophotalea carbinolica (strain DSM 2380 / NBRC 103641 / GraBd1) (Pelobacter carbinolicus).